Here is a 72-residue protein sequence, read N- to C-terminus: Multiple antibiotic resistance protein MarB (72 aa).

The protein is Multiple antibiotic resistance protein MarB (marB) of Escherichia coli (strain K12).